Consider the following 354-residue polypeptide: 5,10-methenyltetrahydromethanopterin hydrogenase (354 aa).

Belongs to the HMD family.

It catalyses the reaction 5,10-methenyl-5,6,7,8-tetrahydromethanopterin + H2 = 5,10-methylenetetrahydromethanopterin + H(+). It functions in the pathway one-carbon metabolism; methanogenesis from CO(2); 5,10-methylene-5,6,7,8-tetrahydromethanopterin from 5,10-methenyl-5,6,7,8-tetrahydromethanopterin (hydrogen route): step 1/1. In terms of biological role, catalyzes the reversible reduction of methenyl-H(4)MPT(+) to methylene-H(4)MPT. The sequence is that of 5,10-methenyltetrahydromethanopterin hydrogenase from Methanococcus maripaludis (strain C7 / ATCC BAA-1331).